We begin with the raw amino-acid sequence, 377 residues long: 3-dehydroquinate synthase (377 aa).

NAD(+) contacts are provided by residues 115–119 (GVIGD), 139–140 (TS), lysine 152, and lysine 161. The Zn(2+) site is built by glutamate 194, histidine 256, and histidine 275.

Belongs to the sugar phosphate cyclases superfamily. Dehydroquinate synthase family. It depends on NAD(+) as a cofactor. Co(2+) is required as a cofactor. The cofactor is Zn(2+).

Its subcellular location is the cytoplasm. The catalysed reaction is 7-phospho-2-dehydro-3-deoxy-D-arabino-heptonate = 3-dehydroquinate + phosphate. It functions in the pathway metabolic intermediate biosynthesis; chorismate biosynthesis; chorismate from D-erythrose 4-phosphate and phosphoenolpyruvate: step 2/7. In terms of biological role, catalyzes the conversion of 3-deoxy-D-arabino-heptulosonate 7-phosphate (DAHP) to dehydroquinate (DHQ). The sequence is that of 3-dehydroquinate synthase from Agrobacterium fabrum (strain C58 / ATCC 33970) (Agrobacterium tumefaciens (strain C58)).